Consider the following 610-residue polypeptide: Probable galacturonosyltransferase 5 (610 aa).

Residues 1–6 (MNQVRR) lie on the Cytoplasmic side of the membrane. A helical; Signal-anchor for type II membrane protein membrane pass occupies residues 7–27 (WQRILILSLLLLSVLAPIVFV). Over 28 to 610 (SNRLKSITSV…PHLQRCNIHD (583 aa)) the chain is Lumenal. Polar residues predominate over residues 86–101 (LSNSSDKSNDTVQSNE). The interval 86–170 (LSNSSDKSND…KNTRVQLERA (85 aa)) is disordered. N-linked (GlcNAc...) asparagine glycosylation is found at Asn88 and Asn94. Over residues 110–123 (EVDKGNNHKPKEEQ) the composition is skewed to basic and acidic residues. Polar residues predominate over residues 124-135 (AVSQKTTVSSNA). Basic and acidic residues predominate over residues 139 to 170 (ISARDIQLNHKTEFRPPSSKSEKNTRVQLERA). 4 N-linked (GlcNAc...) asparagine glycosylation sites follow: Asn196, Asn338, Asn401, and Asn475.

It belongs to the glycosyltransferase 8 family. As to expression, expressed in roots, inflorescences, siliques, leaves and stems.

The protein resides in the golgi apparatus membrane. The protein operates within glycan metabolism; pectin biosynthesis. Functionally, may be involved in pectin and/or xylans biosynthesis in cell walls. In Arabidopsis thaliana (Mouse-ear cress), this protein is Probable galacturonosyltransferase 5 (GAUT5).